Consider the following 512-residue polypeptide: Histidine ammonia-lyase (512 aa).

Positions 143–145 form a cross-link, 5-imidazolinone (Cys-Gly); that stretch reads CSG. S144 carries the post-translational modification 2,3-didehydroalanine (Ser).

The protein belongs to the PAL/histidase family. Post-translationally, contains an active site 4-methylidene-imidazol-5-one (MIO), which is formed autocatalytically by cyclization and dehydration of residues Cys-Ser-Gly.

It localises to the cytoplasm. The catalysed reaction is L-histidine = trans-urocanate + NH4(+). The protein operates within amino-acid degradation; L-histidine degradation into L-glutamate; N-formimidoyl-L-glutamate from L-histidine: step 1/3. The sequence is that of Histidine ammonia-lyase from Streptomyces avermitilis (strain ATCC 31267 / DSM 46492 / JCM 5070 / NBRC 14893 / NCIMB 12804 / NRRL 8165 / MA-4680).